The primary structure comprises 394 residues: Subtilisin-like protease CPC735_005570 (394 aa).

The signal sequence occupies residues 1-21 (MRAIISVALFLSLSLLSAVNA). Residues 22-114 (AEILSAGDTD…IEHDRIANAR (93 aa)) constitute a propeptide that is removed on maturation. The region spanning 37-110 (SYIVVMRDGL…AVKYIEHDRI (74 aa)) is the Inhibitor I9 domain. Positions 123 to 394 (GWNLARISHK…RLLLYNGSGR (272 aa)) constitute a Peptidase S8 domain. Catalysis depends on charge relay system residues D155 and H186. Residues N216 and N247 are each glycosylated (N-linked (GlcNAc...) asparagine). S340 serves as the catalytic Charge relay system. N382 and N390 each carry an N-linked (GlcNAc...) asparagine glycan.

Belongs to the peptidase S8 family.

The protein resides in the secreted. In terms of biological role, secreted subtilisin-like serine protease with keratinolytic activity that contributes to pathogenicity. This Coccidioides posadasii (strain C735) (Valley fever fungus) protein is Subtilisin-like protease CPC735_005570.